Here is a 184-residue protein sequence, read N- to C-terminus: Ribosome-recycling factor (184 aa).

Belongs to the RRF family.

It is found in the cytoplasm. Functionally, responsible for the release of ribosomes from messenger RNA at the termination of protein biosynthesis. May increase the efficiency of translation by recycling ribosomes from one round of translation to another. The chain is Ribosome-recycling factor from Cutibacterium acnes (strain DSM 16379 / KPA171202) (Propionibacterium acnes).